The sequence spans 112 residues: Histone H2A, sperm (112 aa).

At Gln91 the chain carries N5-methylglutamine. Lys106 participates in a covalent cross-link: Glycyl lysine isopeptide (Lys-Gly) (interchain with G-Cter in ubiquitin).

This sequence belongs to the histone H2A family. As to quaternary structure, the nucleosome is a histone octamer containing two molecules each of H2A, H2B, H3 and H4 assembled in one H3-H4 heterotetramer and two H2A-H2B heterodimers. The octamer wraps approximately 147 bp of DNA. In terms of processing, monoubiquitination gives a specific tag for epigenetic transcriptional repression.

Its subcellular location is the nucleus. The protein resides in the chromosome. Functionally, core component of nucleosome. Nucleosomes wrap and compact DNA into chromatin, limiting DNA accessibility to the cellular machineries which require DNA as a template. Histones thereby play a central role in transcription regulation, DNA repair, DNA replication and chromosomal stability. DNA accessibility is regulated via a complex set of post-translational modifications of histones, also called histone code, and nucleosome remodeling. The chain is Histone H2A, sperm from Lytechinus pictus (Painted sea urchin).